A 336-amino-acid chain; its full sequence is Fructose-1,6-bisphosphatase class 1 (336 aa).

Positions 90, 112, 114, and 115 each coordinate Mg(2+). Residues 115-118, Asn-207, and Lys-273 contribute to the substrate site; that span reads DGSS. Residue Glu-279 coordinates Mg(2+).

It belongs to the FBPase class 1 family. Homotetramer. Mg(2+) serves as cofactor.

It localises to the cytoplasm. It catalyses the reaction beta-D-fructose 1,6-bisphosphate + H2O = beta-D-fructose 6-phosphate + phosphate. The protein operates within carbohydrate biosynthesis; gluconeogenesis. The protein is Fructose-1,6-bisphosphatase class 1 of Xanthomonas oryzae pv. oryzae (strain PXO99A).